Here is a 62-residue protein sequence, read N- to C-terminus: Keratin-associated protein 8-1 (62 aa).

The tract at residues 12 to 53 (GCYWGSYGYPLGYSVGCGYGSTYSPVGYGFGYGYNGSGAFGC) is 12 X 2 AA repeats of G-[YCGS].

This sequence belongs to the KRTAP type 8 family. As to quaternary structure, interacts with wool keratins. Wool.

In the wool cortex, wool keratin intermediate filaments are embedded in an interfilamentous matrix, consisting of hair keratin-associated proteins (KRTAP), which are essential for the formation of a rigid and resistant wool shaft through their extensive disulfide bond cross-linking with abundant cysteine residues of wool keratins. The matrix proteins include the high-sulfur and high-glycine-tyrosine keratins. This chain is Keratin-associated protein 8-1 (KRTAP8-1), found in Ovis aries (Sheep).